Here is a 144-residue protein sequence, read N- to C-terminus: Deoxyuridine 5'-triphosphate nucleotidohydrolase (144 aa).

Residues 63–65, asparagine 76, and 80–82 contribute to the substrate site; these read RSG and TID.

This sequence belongs to the dUTPase family. Mg(2+) serves as cofactor.

The catalysed reaction is dUTP + H2O = dUMP + diphosphate + H(+). Its pathway is pyrimidine metabolism; dUMP biosynthesis; dUMP from dCTP (dUTP route): step 2/2. Functionally, this enzyme is involved in nucleotide metabolism: it produces dUMP, the immediate precursor of thymidine nucleotides and it decreases the intracellular concentration of dUTP so that uracil cannot be incorporated into DNA. In Porphyromonas gingivalis (strain ATCC 33277 / DSM 20709 / CIP 103683 / JCM 12257 / NCTC 11834 / 2561), this protein is Deoxyuridine 5'-triphosphate nucleotidohydrolase.